A 76-amino-acid polypeptide reads, in one-letter code: Exodeoxyribonuclease 7 small subunit (76 aa).

This sequence belongs to the XseB family. Heterooligomer composed of large and small subunits.

It is found in the cytoplasm. The catalysed reaction is Exonucleolytic cleavage in either 5'- to 3'- or 3'- to 5'-direction to yield nucleoside 5'-phosphates.. In terms of biological role, bidirectionally degrades single-stranded DNA into large acid-insoluble oligonucleotides, which are then degraded further into small acid-soluble oligonucleotides. The protein is Exodeoxyribonuclease 7 small subunit of Geobacillus thermodenitrificans (strain NG80-2).